Reading from the N-terminus, the 285-residue chain is Dermonecrotic toxin LlSicTox-alphaIII2 (285 aa).

His-12 is a catalytic residue. Mg(2+) is bound by residues Glu-32 and Asp-34. His-47 acts as the Nucleophile in catalysis. Cys-51 and Cys-57 are joined by a disulfide. A Mg(2+)-binding site is contributed by Asp-91.

The protein belongs to the arthropod phospholipase D family. Class I subfamily. Mg(2+) serves as cofactor. In terms of tissue distribution, expressed by the venom gland.

It localises to the secreted. The catalysed reaction is an N-(acyl)-sphingosylphosphocholine = an N-(acyl)-sphingosyl-1,3-cyclic phosphate + choline. It carries out the reaction an N-(acyl)-sphingosylphosphoethanolamine = an N-(acyl)-sphingosyl-1,3-cyclic phosphate + ethanolamine. The enzyme catalyses a 1-acyl-sn-glycero-3-phosphocholine = a 1-acyl-sn-glycero-2,3-cyclic phosphate + choline. It catalyses the reaction a 1-acyl-sn-glycero-3-phosphoethanolamine = a 1-acyl-sn-glycero-2,3-cyclic phosphate + ethanolamine. Its function is as follows. Dermonecrotic toxins cleave the phosphodiester linkage between the phosphate and headgroup of certain phospholipids (sphingolipid and lysolipid substrates), forming an alcohol (often choline) and a cyclic phosphate. This toxin acts on sphingomyelin (SM) (228.2 U/mg). It may also act on ceramide phosphoethanolamine (CPE), lysophosphatidylcholine (LPC) and lysophosphatidylethanolamine (LPE), but not on lysophosphatidylserine (LPS), and lysophosphatidylglycerol (LPG). It acts by transphosphatidylation, releasing exclusively cyclic phosphate products as second products. Induces dermonecrosis, hemolysis, increased vascular permeability, edema, inflammatory response, and platelet aggregation. Is lethal to mice. The sequence is that of Dermonecrotic toxin LlSicTox-alphaIII2 from Loxosceles laeta (South American recluse spider).